The following is a 647-amino-acid chain: DNA ligase (647 aa).

Residues 30-34, 79-80, and Glu-105 contribute to the NAD(+) site; these read DEEYD and SM. The active-site N6-AMP-lysine intermediate is Lys-107. Residues Arg-128, Glu-162, and Lys-301 each coordinate NAD(+). The Zn(2+) site is built by Cys-395, Cys-398, Cys-411, and Cys-416. Positions 570–647 constitute a BRCT domain; it reads KSDGVIFGKT…ESAFNELVKE (78 aa).

This sequence belongs to the NAD-dependent DNA ligase family. LigA subfamily. Requires Mg(2+) as cofactor. Mn(2+) serves as cofactor.

The enzyme catalyses NAD(+) + (deoxyribonucleotide)n-3'-hydroxyl + 5'-phospho-(deoxyribonucleotide)m = (deoxyribonucleotide)n+m + AMP + beta-nicotinamide D-nucleotide.. Functionally, DNA ligase that catalyzes the formation of phosphodiester linkages between 5'-phosphoryl and 3'-hydroxyl groups in double-stranded DNA using NAD as a coenzyme and as the energy source for the reaction. It is essential for DNA replication and repair of damaged DNA. This is DNA ligase from Campylobacter jejuni (strain RM1221).